We begin with the raw amino-acid sequence, 78 residues long: Large ribosomal subunit protein bL28 (78 aa).

This sequence belongs to the bacterial ribosomal protein bL28 family.

The protein is Large ribosomal subunit protein bL28 of Pectobacterium atrosepticum (strain SCRI 1043 / ATCC BAA-672) (Erwinia carotovora subsp. atroseptica).